A 183-amino-acid chain; its full sequence is Endoribonuclease AbiQ (183 aa).

It belongs to the ToxN/AbiQ toxin family. As to quaternary structure, forms a triangular heterohexamer with a single 35-nt-long repeat of RNA antitoxin AntiQ.

Its subcellular location is the cytoplasm. In terms of biological role, toxic component of a type III toxin-antitoxin (TA) system. An endoribonuclease that is probably sequence-specific. It is neutralized by its cognate antitoxin RNA AntiQ, which has 2.8 35 nucleotide-long repeats. Cannot be cloned in L.lactis subsp. cremoris strain NZ9000 in the absence of the antitoxin gene; expression in strain NZ9000 even in the presence of antiQ inhibits growth in a bacteriostatic fashion. Confers resistance to 936 and c2 phages but not P335 phages in L.lactis, causes an abortive infection (Abi phenotype). Viral DNA is replicated but not cleaved from its concatemeric form, while the viral major structural protein is produced normally in the presence of this protein. Operon expression in E.coli confers resistance to 3 phages of the Myoviridae family (T4, RB69 and phage 2) and 1 of the Siphoviridae family (T5), but not other tested phages (T1, T3, lambda vir, HK97, Mu and pilH alpha). The presence of this operon in L.lactis subsp. lactis strain IL1403 during phage P008 infection alters the viral transcription profiles. The protein is Endoribonuclease AbiQ of Lactococcus lactis subsp. lactis (Streptococcus lactis).